The following is a 173-amino-acid chain: DRBM domain-containing protein 340R (173 aa).

The region spanning 30–102 is the DRBM domain; sequence NSIGFLNEFC…AFKTIKELNL (73 aa).

The chain is DRBM domain-containing protein 340R from Invertebrate iridescent virus 6 (IIV-6).